A 328-amino-acid polypeptide reads, in one-letter code: Gonadotropin-releasing hormone receptor (328 aa).

The Extracellular portion of the chain corresponds to 1–38 (MANSASPEQNQNHCSAINNSIPLMQGNLPTLTLSGKIR). A glycan (N-linked (GlcNAc...) asparagine) is linked at N18. Residues 39–58 (VTVTFFLFLLSATFNASFLL) traverse the membrane as a helical segment. Residues 59-77 (KLQKWTQKKEKGKKLSRMK) are Cytoplasmic-facing. Residues 78-97 (LLLKHLTLANLLETLIVMPL) traverse the membrane as a helical segment. The Extracellular segment spans residues 98–115 (DGMWNITVQWYAGELLCK). The N-linked (GlcNAc...) asparagine glycan is linked to N102. C114 and C196 form a disulfide bridge. A helical transmembrane segment spans residues 116–137 (VLSYLKLFSMYAPAFMMVVISL). The Cytoplasmic segment spans residues 138-164 (DRSLAITRPLALKSNSKVGQSMVGLAW). Residues 165 to 184 (ILSSVFAGPQLYIFRMIHLA) traverse the membrane as a helical segment. The Extracellular segment spans residues 185 to 212 (DSSGQTKVFSQCVTHCSFSQWWHQAFYN). A helical transmembrane segment spans residues 213–232 (FFTFSCLFIIPLFIMLICNA). Topologically, residues 233-281 (KIIFTLTRVLHQDPHELQLNQSKNNIPRARLKTLKMTVAFATSFTVCWT) are cytoplasmic. A helical transmembrane segment spans residues 282–300 (PYYVLGIWYWFDPEMLNRL). Over 301-306 (SDPVNH) the chain is Extracellular. A helical transmembrane segment spans residues 307-326 (FFFLFAFLNPCFDPLIYGYF). Topologically, residues 327 to 328 (SL) are cytoplasmic.

This sequence belongs to the G-protein coupled receptor 1 family. In terms of tissue distribution, pituitary, ovary, testis, breast and prostate but not in liver and spleen.

The protein resides in the cell membrane. Functionally, receptor for gonadotropin releasing hormone (GnRH) that mediates the action of GnRH to stimulate the secretion of the gonadotropic hormones luteinizing hormone (LH) and follicle-stimulating hormone (FSH). This receptor mediates its action by association with G-proteins that activate a phosphatidylinositol-calcium second messenger system. Isoform 2 may act as an inhibitor of GnRH-R signaling. This Homo sapiens (Human) protein is Gonadotropin-releasing hormone receptor (GNRHR).